The following is a 915-amino-acid chain: Translation initiation factor IF-2 (915 aa).

2 disordered regions span residues 1-105 (MSEG…RALT) and 121-295 (VEAA…RAAI). A compositionally biased stretch (low complexity) spans 57–81 (PGTPSAPEGGSSSAPAPQSGNAPQG). Positions 84–101 (RSGGGNRGSGRGGAGGAG) are enriched in gly residues. 2 stretches are compositionally biased toward basic and acidic residues: residues 121–135 (VEAA…EQEK) and 143–180 (EEAR…RKAA). Positions 186–195 (AEAPPVPPPA) are enriched in pro residues. 2 stretches are compositionally biased toward low complexity: residues 201–213 (AAPS…SRTA) and 230–239 (KVPVAAPSAP). The span at 243–256 (RLRERGDEGEEERK) shows a compositional bias: basic and acidic residues. Over residues 266–278 (PAPRKAAAPVAKK) the composition is skewed to low complexity. A compositionally biased stretch (basic and acidic residues) spans 279 to 295 (AVAEPRRGGRIDVRAAI). The region spanning 414 to 584 (PRPPVVTVMG…LLQAEVLDLK (171 aa)) is the tr-type G domain. The interval 423–430 (GHVDHGKT) is G1. 423–430 (GHVDHGKT) is a binding site for GTP. The interval 448-452 (GITQH) is G2. Residues 470-473 (DTPG) are G3. Residues 470 to 474 (DTPGH) and 524 to 527 (NKCD) contribute to the GTP site. The G4 stretch occupies residues 524–527 (NKCD). The tract at residues 560–562 (SAL) is G5.

The protein belongs to the TRAFAC class translation factor GTPase superfamily. Classic translation factor GTPase family. IF-2 subfamily.

It localises to the cytoplasm. One of the essential components for the initiation of protein synthesis. Protects formylmethionyl-tRNA from spontaneous hydrolysis and promotes its binding to the 30S ribosomal subunits. Also involved in the hydrolysis of GTP during the formation of the 70S ribosomal complex. The polypeptide is Translation initiation factor IF-2 (Granulibacter bethesdensis (strain ATCC BAA-1260 / CGDNIH1)).